Reading from the N-terminus, the 141-residue chain is Hemoglobin subunit alpha (141 aa).

The 141-residue stretch at 1–141 (VLSAADKAHV…VSTVLTSKYR (141 aa)) folds into the Globin domain. Ser-3 carries the post-translational modification Phosphoserine. Residues Lys-7 and Lys-11 each carry the N6-succinyllysine modification. Residue Lys-16 is modified to N6-acetyllysine; alternate. Residue Lys-16 is modified to N6-succinyllysine; alternate. At Tyr-24 the chain carries Phosphotyrosine. Ser-35 carries the phosphoserine modification. Lys-40 carries the post-translational modification N6-succinyllysine. Phosphoserine is present on Ser-49. Position 58 (His-58) interacts with O2. Heme b is bound at residue His-87. The residue at position 108 (Thr-108) is a Phosphothreonine. The residue at position 124 (Ser-124) is a Phosphoserine. A phosphothreonine mark is found at Thr-134 and Thr-137. A Phosphoserine modification is found at Ser-138.

The protein belongs to the globin family. In terms of assembly, heterotetramer of two alpha chains and two beta chains. In terms of tissue distribution, red blood cells.

Functionally, involved in oxygen transport from the lung to the various peripheral tissues. Hemopressin acts as an antagonist peptide of the cannabinoid receptor CNR1. Hemopressin-binding efficiently blocks cannabinoid receptor CNR1 and subsequent signaling. In Bradypus tridactylus (Pale-throated three-toed sloth), this protein is Hemoglobin subunit alpha (HBA).